The primary structure comprises 585 residues: A-type ATP synthase subunit A (585 aa).

Glycine 231–threonine 238 contributes to the ATP binding site.

It belongs to the ATPase alpha/beta chains family. In terms of assembly, has multiple subunits with at least A(3), B(3), C, D, E, F, H, I and proteolipid K(x).

The protein localises to the cell membrane. It carries out the reaction ATP + H2O + 4 H(+)(in) = ADP + phosphate + 5 H(+)(out). Its function is as follows. Component of the A-type ATP synthase that produces ATP from ADP in the presence of a proton gradient across the membrane. The A chain is the catalytic subunit. The protein is A-type ATP synthase subunit A of Thermococcus onnurineus (strain NA1).